Here is a 542-residue protein sequence, read N- to C-terminus: Glutamyl-tRNA(Gln) amidotransferase subunit A, mitochondrial (542 aa).

Active-site charge relay system residues include K55 and S143. The Acyl-ester intermediate role is filled by S167.

It belongs to the amidase family. GatA subfamily. Subunit of the heterotrimeric GatCAB amidotransferase (AdT) complex, composed of A, B and C subunits.

The protein resides in the mitochondrion. The enzyme catalyses L-glutamyl-tRNA(Gln) + L-glutamine + ATP + H2O = L-glutaminyl-tRNA(Gln) + L-glutamate + ADP + phosphate + H(+). Functionally, allows the formation of correctly charged Gln-tRNA(Gln) through the transamidation of misacylated Glu-tRNA(Gln) in the mitochondria. The reaction takes place in the presence of glutamine and ATP through an activated gamma-phospho-Glu-tRNA(Gln). The chain is Glutamyl-tRNA(Gln) amidotransferase subunit A, mitochondrial from Neurospora crassa (strain ATCC 24698 / 74-OR23-1A / CBS 708.71 / DSM 1257 / FGSC 987).